Consider the following 257-residue polypeptide: Small ribosomal subunit protein uS2 (257 aa).

This sequence belongs to the universal ribosomal protein uS2 family.

The polypeptide is Small ribosomal subunit protein uS2 (Ruegeria pomeroyi (strain ATCC 700808 / DSM 15171 / DSS-3) (Silicibacter pomeroyi)).